A 465-amino-acid polypeptide reads, in one-letter code: Argininosuccinate lyase (465 aa).

This sequence belongs to the lyase 1 family. Argininosuccinate lyase subfamily.

It localises to the cytoplasm. It catalyses the reaction 2-(N(omega)-L-arginino)succinate = fumarate + L-arginine. Its pathway is amino-acid biosynthesis; L-arginine biosynthesis; L-arginine from L-ornithine and carbamoyl phosphate: step 3/3. In Deinococcus deserti (strain DSM 17065 / CIP 109153 / LMG 22923 / VCD115), this protein is Argininosuccinate lyase.